A 507-amino-acid polypeptide reads, in one-letter code: Dolichyl pyrophosphate Man9GlcNAc2 alpha-1,3-glucosyltransferase (507 aa).

The Cytoplasmic segment spans residues 1-2; sequence ME. A helical transmembrane segment spans residues 3–23; sequence SWPWMAVVVLLGLTVRWTVSL. The Lumenal portion of the chain corresponds to 24–114; sequence SSYSGAGKPP…SQAHKLFMRA (91 aa). A glycan (N-linked (GlcNAc...) asparagine) is linked at Asn59. Residues 115–135 form a helical membrane-spanning segment; it reads TVLAADLLIYVPAVLLYCYSL. Over 136–143 the chain is Cytoplasmic; the sequence is KEISPKRK. The chain crosses the membrane as a helical span at residues 144–164; the sequence is IASALCILLYPGLILIDYGHF. Residues 165–172 are Lumenal-facing; the sequence is QYNSVSLG. Residues 173-193 traverse the membrane as a helical segment; sequence FALWGVLGVSWDWDLLGSLAF. The Cytoplasmic segment spans residues 194–229; the sequence is CLALNYKQMELYHSLPFFCFLLGKCFKKGLKGKGLA. Residues 230 to 250 traverse the membrane as a helical segment; it reads LFIRIACTVLASFLLCWLPFL. The Lumenal segment spans residues 251–297; the sequence is TEREHALQVVRRLFPVDRGLFEDKVANIWCSVNVFLKIKDTLPRHIQ. The helical transmembrane segment at 298 to 318 threads the bilayer; sequence IAISFCFTLLSLLPACIKLTV. Over 319 to 332 the chain is Cytoplasmic; sequence RPSCKGFRFTLVSC. Residues 333–353 traverse the membrane as a helical segment; sequence ALSFFLFSFQVHEKSILLVSL. The Lumenal portion of the chain corresponds to 354–361; the sequence is PVCLVLTE. The helical transmembrane segment at 362-382 threads the bilayer; sequence IPFMSTWFLLVSTFSMLPLLL. Residues 383 to 385 are Cytoplasmic-facing; that stretch reads KDE. A helical transmembrane segment spans residues 386-406; that stretch reads LLLPSVVTVMAFVIACGTFFP. Over 407 to 437 the chain is Lumenal; that stretch reads MLENTSEEQLQLKSFAVSVRRHLPGFTFLPR. Residues 438 to 458 form a helical membrane-spanning segment; that stretch reads IMQCLFLSSVITMVLLTILSV. The Cytoplasmic portion of the chain corresponds to 459–468; it reads TLDPPQKLPD. The helical transmembrane segment at 469–489 threads the bilayer; the sequence is LFPVLICFVSCVNFVFFLVYF. The Lumenal portion of the chain corresponds to 490–507; that stretch reads NIVIMWDSKNGRNRKKIE.

This sequence belongs to the ALG6/ALG8 glucosyltransferase family.

The protein localises to the endoplasmic reticulum membrane. The catalysed reaction is an alpha-D-Man-(1-&gt;2)-alpha-D-Man-(1-&gt;2)-alpha-D-Man-(1-&gt;3)-[alpha-D-Man-(1-&gt;2)-alpha-D-Man-(1-&gt;3)-[alpha-D-Man-(1-&gt;2)-alpha-D-Man-(1-&gt;6)]-alpha-D-Man-(1-&gt;6)]-beta-D-Man-(1-&gt;4)-beta-D-GlcNAc-(1-&gt;4)-alpha-D-GlcNAc-diphospho-di-trans,poly-cis-dolichol + a di-trans,poly-cis-dolichyl beta-D-glucosyl phosphate = an alpha-D-Glc-(1-&gt;3)-alpha-D-Man-(1-&gt;2)-alpha-D-Man-(1-&gt;2)-alpha-D-Man-(1-&gt;3)-[alpha-D-Man-(1-&gt;2)-alpha-D-Man-(1-&gt;3)-[alpha-D-Man-(1-&gt;2)-alpha-D-Man-(1-&gt;6)]-alpha-D-Man-(1-&gt;6)]-beta-D-Man-(1-&gt;4)-beta-D-GlcNAc-(1-&gt;4)-alpha-D-GlcNAc-diphospho-di-trans,poly-cis-dolichol + a di-trans,poly-cis-dolichyl phosphate + H(+). Its pathway is protein modification; protein glycosylation. Dolichyl pyrophosphate Man9GlcNAc2 alpha-1,3-glucosyltransferase that operates in the biosynthetic pathway of dolichol-linked oligosaccharides, the glycan precursors employed in protein asparagine (N)-glycosylation. The assembly of dolichol-linked oligosaccharides begins on the cytosolic side of the endoplasmic reticulum membrane and finishes in its lumen. The sequential addition of sugars to dolichol pyrophosphate produces dolichol-linked oligosaccharides containing fourteen sugars, including two GlcNAcs, nine mannoses and three glucoses. Once assembled, the oligosaccharide is transferred from the lipid to nascent proteins by oligosaccharyltransferases. In the lumen of the endoplasmic reticulum, adds the first glucose residue from dolichyl phosphate glucose (Dol-P-Glc) onto the lipid-linked oligosaccharide intermediate Man(9)GlcNAc(2)-PP-Dol to produce Glc(1)Man(9)GlcNAc(2)-PP-Dol. Glc(1)Man(9)GlcNAc(2)-PP-Dol is a substrate for ALG8, the following enzyme in the biosynthetic pathway. The polypeptide is Dolichyl pyrophosphate Man9GlcNAc2 alpha-1,3-glucosyltransferase (Mus musculus (Mouse)).